A 123-amino-acid polypeptide reads, in one-letter code: Large ribosomal subunit protein bL21 (123 aa).

Belongs to the bacterial ribosomal protein bL21 family. As to quaternary structure, part of the 50S ribosomal subunit. Contacts protein L20.

Its function is as follows. This protein binds to 23S rRNA in the presence of protein L20. In Rippkaea orientalis (strain PCC 8801 / RF-1) (Cyanothece sp. (strain PCC 8801)), this protein is Large ribosomal subunit protein bL21.